Here is a 124-residue protein sequence, read N- to C-terminus: Splicing factor 3B subunit 6-like protein (124 aa).

Positions 16-29 (EVNRVLYVRNLPFN) are interaction with pre-mRNA branch site. Residues 19–94 (RVLYVRNLPF…RYLIVLYYQH (76 aa)) enclose the RRM domain.

Its subcellular location is the nucleus. May be necessary for the splicing of pre-mRNA. The protein is Splicing factor 3B subunit 6-like protein of Arabidopsis thaliana (Mouse-ear cress).